The following is a 432-amino-acid chain: Gamma-glutamyl phosphate reductase (432 aa).

The protein belongs to the gamma-glutamyl phosphate reductase family.

Its subcellular location is the cytoplasm. The enzyme catalyses L-glutamate 5-semialdehyde + phosphate + NADP(+) = L-glutamyl 5-phosphate + NADPH + H(+). It participates in amino-acid biosynthesis; L-proline biosynthesis; L-glutamate 5-semialdehyde from L-glutamate: step 2/2. Its function is as follows. Catalyzes the NADPH-dependent reduction of L-glutamate 5-phosphate into L-glutamate 5-semialdehyde and phosphate. The product spontaneously undergoes cyclization to form 1-pyrroline-5-carboxylate. The sequence is that of Gamma-glutamyl phosphate reductase from Psychrobacter sp. (strain PRwf-1).